The chain runs to 321 residues: Serine protease 52 (321 aa).

An N-terminal signal peptide occupies residues 1-27; the sequence is MKRWKDRRTGLLLPLVLLLFGACSSLA. The 232-residue stretch at 56–287 folds into the Peptidase S1 domain; that stretch reads IVGGKPANIL…YVRWISKQTA (232 aa). Cys81 and Cys97 form a disulfide bridge. Catalysis depends on charge relay system residues His96 and Asp142. A glycan (N-linked (GlcNAc...) asparagine) is linked at Asn153. Disulfide bonds link Cys175–Cys242, Cys208–Cys221, and Cys232–Cys263. The active-site Charge relay system is Ser236. A helical membrane pass occupies residues 300-320; that stretch reads ACPLVLSCRAILFLYFVMFLL.

The protein belongs to the peptidase S1 family.

The protein resides in the membrane. Its function is as follows. Probable serine protease. In Mus musculus (Mouse), this protein is Serine protease 52 (Prss52).